The sequence spans 118 residues: Ribonuclease P protein component (118 aa).

Belongs to the RnpA family. As to quaternary structure, consists of a catalytic RNA component (M1 or rnpB) and a protein subunit.

It carries out the reaction Endonucleolytic cleavage of RNA, removing 5'-extranucleotides from tRNA precursor.. Functionally, RNaseP catalyzes the removal of the 5'-leader sequence from pre-tRNA to produce the mature 5'-terminus. It can also cleave other RNA substrates such as 4.5S RNA. The protein component plays an auxiliary but essential role in vivo by binding to the 5'-leader sequence and broadening the substrate specificity of the ribozyme. This chain is Ribonuclease P protein component, found in Photobacterium profundum (strain SS9).